A 311-amino-acid polypeptide reads, in one-letter code: tRNA-cytidine(32) 2-sulfurtransferase (311 aa).

Positions 47–52 (SGGKDS) match the PP-loop motif motif. The [4Fe-4S] cluster site is built by cysteine 122, cysteine 125, and cysteine 213.

This sequence belongs to the TtcA family. In terms of assembly, homodimer. Mg(2+) serves as cofactor. It depends on [4Fe-4S] cluster as a cofactor.

It is found in the cytoplasm. It carries out the reaction cytidine(32) in tRNA + S-sulfanyl-L-cysteinyl-[cysteine desulfurase] + AH2 + ATP = 2-thiocytidine(32) in tRNA + L-cysteinyl-[cysteine desulfurase] + A + AMP + diphosphate + H(+). It participates in tRNA modification. In terms of biological role, catalyzes the ATP-dependent 2-thiolation of cytidine in position 32 of tRNA, to form 2-thiocytidine (s(2)C32). The sulfur atoms are provided by the cysteine/cysteine desulfurase (IscS) system. This chain is tRNA-cytidine(32) 2-sulfurtransferase, found in Escherichia coli O1:K1 / APEC.